A 341-amino-acid chain; its full sequence is tRNA N6-adenosine threonylcarbamoyltransferase (341 aa).

Fe cation is bound by residues histidine 111 and histidine 115. Substrate is bound by residues 134 to 138, aspartate 167, glycine 180, and asparagine 276; that span reads LVSGG. Residue aspartate 304 participates in Fe cation binding.

Belongs to the KAE1 / TsaD family. The cofactor is Fe(2+).

The protein localises to the cytoplasm. It carries out the reaction L-threonylcarbamoyladenylate + adenosine(37) in tRNA = N(6)-L-threonylcarbamoyladenosine(37) in tRNA + AMP + H(+). Required for the formation of a threonylcarbamoyl group on adenosine at position 37 (t(6)A37) in tRNAs that read codons beginning with adenine. Is involved in the transfer of the threonylcarbamoyl moiety of threonylcarbamoyl-AMP (TC-AMP) to the N6 group of A37, together with TsaE and TsaB. TsaD likely plays a direct catalytic role in this reaction. In Pseudomonas fluorescens (strain Pf0-1), this protein is tRNA N6-adenosine threonylcarbamoyltransferase.